Reading from the N-terminus, the 152-residue chain is Protein-export protein SecB (152 aa).

Belongs to the SecB family. Homotetramer, a dimer of dimers. One homotetramer interacts with 1 SecA dimer.

It is found in the cytoplasm. In terms of biological role, one of the proteins required for the normal export of preproteins out of the cell cytoplasm. It is a molecular chaperone that binds to a subset of precursor proteins, maintaining them in a translocation-competent state. It also specifically binds to its receptor SecA. This chain is Protein-export protein SecB, found in Rickettsia felis (strain ATCC VR-1525 / URRWXCal2) (Rickettsia azadi).